The primary structure comprises 705 residues: Ion-translocating oxidoreductase complex subunit C (705 aa).

4Fe-4S ferredoxin-type domains follow at residues 368 to 397 (MGET…QQLY) and 407 to 435 (KATA…LVQY). Cysteine 377, cysteine 380, cysteine 383, cysteine 387, cysteine 416, cysteine 419, cysteine 422, and cysteine 426 together coordinate [4Fe-4S] cluster. The interval 536–684 (RARQAENIPA…EPVDPRKAAV (149 aa)) is disordered.

It belongs to the 4Fe4S bacterial-type ferredoxin family. RnfC subfamily. In terms of assembly, the complex is composed of six subunits: RnfA, RnfB, RnfC, RnfD, RnfE and RnfG. The cofactor is [4Fe-4S] cluster.

It localises to the cell inner membrane. Functionally, part of a membrane-bound complex that couples electron transfer with translocation of ions across the membrane. The polypeptide is Ion-translocating oxidoreductase complex subunit C (Citrobacter koseri (strain ATCC BAA-895 / CDC 4225-83 / SGSC4696)).